The sequence spans 456 residues: Phospholipase A1 member A (456 aa).

Positions 1–24 are cleaved as a signal peptide; it reads MCPGLWGTCFWLWGSLLWLSIGRS. Ser-166 (nucleophile) is an active-site residue. Residue Asp-190 is the Charge relay system of the active site. A disulfide bridge links Cys-245 with Cys-258. His-260 serves as the catalytic Charge relay system. Disulfide bonds link Cys-282-Cys-293 and Cys-296-Cys-304. N-linked (GlcNAc...) asparagine glycosylation is present at Asn-365.

Belongs to the AB hydrolase superfamily. Lipase family.

Its subcellular location is the secreted. The catalysed reaction is a 1,2-diacyl-sn-glycero-3-phospho-L-serine + H2O = a 2-acyl-sn-glycero-3-phospho-L-serine + a fatty acid + H(+). It catalyses the reaction 1,2-di-(9Z)-octadecenoyl-sn-glycero-3-phospho-L-serine + H2O = 2-(9Z-octadecenoyl)-sn-glycero-3-phospho-L-serine + (9Z)-octadecenoate + H(+). It carries out the reaction 1-hexadecanoyl-2-(5Z,8Z,11Z,14Z-eicosatetraenoyl)-sn-glycero-3-phospho-L-serine + H2O = 2-(5Z,8Z,11Z,14Z)-eicosatetraenoyl-sn-glycero-3-phospho-L-serine + hexadecanoate + H(+). The enzyme catalyses a 1-acyl-sn-glycero-3-phospho-L-serine + H2O = sn-glycero-3-phospho-L-serine + a fatty acid + H(+). The catalysed reaction is 1-(9Z-octadecenoyl)-sn-glycero-3-phospho-L-serine + H2O = sn-glycero-3-phospho-L-serine + (9Z)-octadecenoate + H(+). Its function is as follows. Hydrolyzes the ester bond of the acyl group attached at the sn-1 position of phosphatidylserines (phospholipase A1 activity) and 1-acyl-2-lysophosphatidylserines (lysophospholipase activity) in the pathway of phosphatidylserines acyl chain remodeling. Cleaves phosphatidylserines exposed on the outer leaflet of the plasma membrane of apoptotic cells producing 2-acyl-1-lysophosphatidylserines, which in turn enhance mast cell activation and histamine production. Has no activity toward other glycerophospholipids including phosphatidylcholines, phosphatidylethanolamines, phosphatidic acids or phosphatidylinositols, or glycerolipids such as triolein. The protein is Phospholipase A1 member A of Rattus norvegicus (Rat).